A 417-amino-acid polypeptide reads, in one-letter code: Tryptophan synthase beta chain (417 aa).

The residue at position 99 (K99) is an N6-(pyridoxal phosphate)lysine.

Belongs to the TrpB family. As to quaternary structure, tetramer of two alpha and two beta chains. It depends on pyridoxal 5'-phosphate as a cofactor.

It catalyses the reaction (1S,2R)-1-C-(indol-3-yl)glycerol 3-phosphate + L-serine = D-glyceraldehyde 3-phosphate + L-tryptophan + H2O. The protein operates within amino-acid biosynthesis; L-tryptophan biosynthesis; L-tryptophan from chorismate: step 5/5. Functionally, the beta subunit is responsible for the synthesis of L-tryptophan from indole and L-serine. This is Tryptophan synthase beta chain from Corynebacterium glutamicum (strain R).